The following is a 115-amino-acid chain: U31-theraphotoxin-Cg1b (115 aa).

An N-terminal signal peptide occupies residues 1–18 (MKLCVIIIASLMVASVSG). Positions 19 to 51 (RLRKIKGTELDKKMLLEKLGHGMDIRFEETPRE) are excised as a propeptide. 4 cysteine pairs are disulfide-bonded: C52-C67, C60-C73, C64-C113, and C66-C86.

Belongs to the neurotoxin 03 (Tx2) family. 02 subfamily. In terms of tissue distribution, expressed by the venom gland.

The protein localises to the secreted. Functionally, probable ion channel inhibitor. The sequence is that of U31-theraphotoxin-Cg1b from Chilobrachys guangxiensis (Chinese earth tiger tarantula).